Reading from the N-terminus, the 337-residue chain is Anthranilate phosphoribosyltransferase (337 aa).

5-phospho-alpha-D-ribose 1-diphosphate-binding positions include glycine 81, 84–85 (GD), serine 89, 91–94 (NVST), 109–117 (KHGNRALSS), and alanine 121. Glycine 81 provides a ligand contact to anthranilate. A Mg(2+)-binding site is contributed by serine 93. Asparagine 112 serves as a coordination point for anthranilate. Anthranilate is bound at residue arginine 167. Residues aspartate 226 and glutamate 227 each contribute to the Mg(2+) site.

This sequence belongs to the anthranilate phosphoribosyltransferase family. In terms of assembly, homodimer. Mg(2+) serves as cofactor.

The enzyme catalyses N-(5-phospho-beta-D-ribosyl)anthranilate + diphosphate = 5-phospho-alpha-D-ribose 1-diphosphate + anthranilate. It functions in the pathway amino-acid biosynthesis; L-tryptophan biosynthesis; L-tryptophan from chorismate: step 2/5. Catalyzes the transfer of the phosphoribosyl group of 5-phosphorylribose-1-pyrophosphate (PRPP) to anthranilate to yield N-(5'-phosphoribosyl)-anthranilate (PRA). The protein is Anthranilate phosphoribosyltransferase of Bradyrhizobium sp. (strain ORS 278).